Here is a 572-residue protein sequence, read N- to C-terminus: Sulfite reductase [NADPH] hemoprotein beta-component (572 aa).

The [4Fe-4S] cluster site is built by cysteine 437, cysteine 443, cysteine 482, and cysteine 486. Position 486 (cysteine 486) interacts with siroheme.

It belongs to the nitrite and sulfite reductase 4Fe-4S domain family. As to quaternary structure, alpha(8)-beta(8). The alpha component is a flavoprotein, the beta component is a hemoprotein. Siroheme serves as cofactor. Requires [4Fe-4S] cluster as cofactor.

The catalysed reaction is hydrogen sulfide + 3 NADP(+) + 3 H2O = sulfite + 3 NADPH + 4 H(+). It participates in sulfur metabolism; hydrogen sulfide biosynthesis; hydrogen sulfide from sulfite (NADPH route): step 1/1. In terms of biological role, component of the sulfite reductase complex that catalyzes the 6-electron reduction of sulfite to sulfide. This is one of several activities required for the biosynthesis of L-cysteine from sulfate. This chain is Sulfite reductase [NADPH] hemoprotein beta-component, found in Lysinibacillus sphaericus (strain C3-41).